Here is a 761-residue protein sequence, read N- to C-terminus: Cyclin-D-binding Myb-like transcription factor 1 (761 aa).

Positions 1 to 237 (MSTVEEDSDT…TPEEIEKLKE (237 aa)) are interaction with CCND2. A disordered region spans residues 24 to 51 (DTDGNLILHCPQNDPDEVDSEDSTEPPH). The span at 37–47 (DPDEVDSEDST) shows a compositional bias: acidic residues. Residues 87–170 (VTMTATTEVA…IDILMNNIER (84 aa)) form a required for transcriptional activation region. The segment at 87–458 (VTMTATTEVA…DNTAISPSPM (372 aa)) is required for DNA-binding. The segment at 176-761 (GIKDATEIIF…KDVEDLVNCH (586 aa)) is interaction with CCND1, CCND2 and CCND3. The 39-residue stretch at 225-263 (GKYTPEEIEKLKELRIKHGNDWATIGAALGRSASSVKDR) folds into the Myb-like 1 domain. The HTH myb-type domain maps to 268-333 (KDTCNTGKWT…KWLNYLNWKQ (66 aa)). Residues 306–329 (WAAVAERVGTRSEKQCRSKWLNYL) constitute a DNA-binding region (H-T-H motif). The Myb-like 2 domain maps to 339–388 (WTKEDEINLILRIAELDVADENDINWDLLAEGWSSVRSPQWLRSKWWTIK). Residues 459 to 761 (AALQIPVQIT…KDVEDLVNCH (303 aa)) form a required for transcriptional activation region. 2 disordered regions span residues 584 to 625 (SLSQ…MTIQ) and 740 to 761 (GSSL…VNCH).

Belongs to the DMTF1 family. Interacts with the D-type cyclins CCND1, CCND2 and CCND3. Interaction with D-type cyclins may modulate transcriptional activation by this protein. Phosphorylated by the cyclin-D2/CDK4, cyclin-D3/CDK4 and cyclin-D2/CDK6 complexes and to a lesser extent by the cyclin-D1/CDK4 complex. In terms of tissue distribution, ubiquitously expressed (at mRNA level). Expressed in brain, intestine, kidney, lung, pancreas, skin, spleen and tongue (at protein level). Expressed at high levels in testis and thymus (at protein level). In all tissues examined, expression is predominant in non-proliferating and differentiated cell types. These include epithelial, interstitial and smooth muscle cells of the intestine, differentiated spermatids, sperm and interstitial cells of the testis, and lymphoid cells of the medullary compartment of the thymus.

It localises to the nucleus. Transcriptional activator which activates the CDKN2A/ARF locus in response to Ras-Raf signaling, thereby promoting p53/TP53-dependent growth arrest. May also cooperate with MYB to activate transcription of the ANPEP gene. Binds to the consensus sequence 5'-CCCG[GT]ATGT-3'. The chain is Cyclin-D-binding Myb-like transcription factor 1 (Dmtf1) from Mus musculus (Mouse).